A 466-amino-acid chain; its full sequence is ATP synthase subunit beta (466 aa).

Gly148–Thr155 provides a ligand contact to ATP.

The protein belongs to the ATPase alpha/beta chains family. F-type ATPases have 2 components, CF(1) - the catalytic core - and CF(0) - the membrane proton channel. CF(1) has five subunits: alpha(3), beta(3), gamma(1), delta(1), epsilon(1). CF(0) has three main subunits: a(1), b(2) and c(9-12). The alpha and beta chains form an alternating ring which encloses part of the gamma chain. CF(1) is attached to CF(0) by a central stalk formed by the gamma and epsilon chains, while a peripheral stalk is formed by the delta and b chains.

The protein localises to the cell inner membrane. It catalyses the reaction ATP + H2O + 4 H(+)(in) = ADP + phosphate + 5 H(+)(out). Produces ATP from ADP in the presence of a proton gradient across the membrane. The catalytic sites are hosted primarily by the beta subunits. This chain is ATP synthase subunit beta, found in Xylella fastidiosa (strain 9a5c).